Reading from the N-terminus, the 243-residue chain is Retrotransposon Gag-like protein 6 (243 aa).

The segment covering 1–12 (MVQPRTSKTESP) has biased composition (polar residues). The tract at residues 1 to 22 (MVQPRTSKTESPASAPGASAQM) is disordered. Positions 29–69 (LTSLRLTNSALRREASTLRAEKANLTNMLESVMAELTLLRT) form a coiled coil. Disordered regions lie at residues 84-105 (SAITSNGTRPMTTPPTSLPEPF) and 218-243 (TGSCPVHPASNGTNPAPALPSRGRNL). The span at 85-94 (AITSNGTRPM) shows a compositional bias: polar residues.

Belongs to the LDOC1 family. As to expression, widely expressed.

In Mus musculus (Mouse), this protein is Retrotransposon Gag-like protein 6.